The primary structure comprises 96 residues: Large ribosomal subunit protein uL23 (96 aa).

The protein belongs to the universal ribosomal protein uL23 family. As to quaternary structure, part of the 50S ribosomal subunit. Contacts protein L29, and trigger factor when it is bound to the ribosome.

In terms of biological role, one of the early assembly proteins it binds 23S rRNA. One of the proteins that surrounds the polypeptide exit tunnel on the outside of the ribosome. Forms the main docking site for trigger factor binding to the ribosome. This is Large ribosomal subunit protein uL23 from Syntrophus aciditrophicus (strain SB).